A 247-amino-acid chain; its full sequence is GTP cyclohydrolase 1 type 2 homolog (247 aa).

Residues His63, His64, Asp101, His215, and Glu219 each coordinate a divalent metal cation.

Belongs to the GTP cyclohydrolase I type 2/NIF3 family. Homohexamer.

The protein is GTP cyclohydrolase 1 type 2 homolog of Buchnera aphidicola subsp. Acyrthosiphon pisum (strain APS) (Acyrthosiphon pisum symbiotic bacterium).